Consider the following 227-residue polypeptide: 2-heptyl-1-hydroxyquinolin-4(1H)-one methyltransferase (227 aa).

Belongs to the methyltransferase superfamily. Monomer.

The protein localises to the cytoplasm. The catalysed reaction is 2-heptyl-1-hydroxy-4(1H)-quinolinone + S-adenosyl-L-methionine = 2-heptyl-1-methoxy-4(1H)-quinolinone + S-adenosyl-L-homocysteine + H(+). The enzyme catalyses 3-bromo-2-heptyl-1-hydroxy-4(1H)-quinolinone + S-adenosyl-L-methionine = 3-bromo-2-heptyl-1-methoxy-4(1H)-quinolinone + S-adenosyl-L-homocysteine + H(+). In terms of biological role, involved in cellular response to chemical stress and may contribute to resistance toward antimicrobial natural compounds as well as drugs. Catalyzes the methylation and detoxification of the P.aeruginosa toxin 2-heptyl-1-hydroxy-4(1H)-quinolinone (HQNO) to 2-heptyl-1-methoxy-4(1H)-quinolinone (HMOQ). Can also methylate 3-bromo-2-heptyl-1-hydroxy-4(1H)-quinolinone, and shows much lower activity with 1-hydroxyquinolin-4(1H)-one, quercetin, 4-hydroxyquinolin-2(1H)-one (DHQ) and 4-hydroxyisoquinolin-1(2H)-one. The polypeptide is 2-heptyl-1-hydroxyquinolin-4(1H)-one methyltransferase (Mycobacteroides abscessus (strain ATCC 19977 / DSM 44196 / CCUG 20993 / CIP 104536 / JCM 13569 / NCTC 13031 / TMC 1543 / L948) (Mycobacterium abscessus)).